Here is a 182-residue protein sequence, read N- to C-terminus: Ribosome maturation factor RimM (182 aa).

A PRC barrel domain is found at 103–182; sequence EGDYYWKDLM…TIEVDWDPGF (80 aa).

This sequence belongs to the RimM family. Binds ribosomal protein uS19.

The protein localises to the cytoplasm. Functionally, an accessory protein needed during the final step in the assembly of 30S ribosomal subunit, possibly for assembly of the head region. Essential for efficient processing of 16S rRNA. May be needed both before and after RbfA during the maturation of 16S rRNA. It has affinity for free ribosomal 30S subunits but not for 70S ribosomes. In Klebsiella pneumoniae subsp. pneumoniae (strain ATCC 700721 / MGH 78578), this protein is Ribosome maturation factor RimM.